A 356-amino-acid polypeptide reads, in one-letter code: tRNA N6-adenosine threonylcarbamoyltransferase (356 aa).

Fe cation contacts are provided by H115 and H119. Substrate contacts are provided by residues 138–142, D171, G184, and N283; that span reads LVSGG. Fe cation is bound at residue D311.

Belongs to the KAE1 / TsaD family. Fe(2+) serves as cofactor.

The protein resides in the cytoplasm. It carries out the reaction L-threonylcarbamoyladenylate + adenosine(37) in tRNA = N(6)-L-threonylcarbamoyladenosine(37) in tRNA + AMP + H(+). Its function is as follows. Required for the formation of a threonylcarbamoyl group on adenosine at position 37 (t(6)A37) in tRNAs that read codons beginning with adenine. Is involved in the transfer of the threonylcarbamoyl moiety of threonylcarbamoyl-AMP (TC-AMP) to the N6 group of A37, together with TsaE and TsaB. TsaD likely plays a direct catalytic role in this reaction. The protein is tRNA N6-adenosine threonylcarbamoyltransferase of Prochlorococcus marinus (strain SARG / CCMP1375 / SS120).